A 204-amino-acid chain; its full sequence is Holliday junction branch migration complex subunit RuvA (204 aa).

Residues 1-64 (MIGKLKGTID…EDQLKLFGFM (64 aa)) form a domain I region. The domain II stretch occupies residues 65–143 (TALEREWFNL…AFAGEAINIA (79 aa)). Residues 144-151 (LKQELGEG) are flexible linker. Residues 152 to 204 (VAAAPVADAVSALTNLGYSRDQAANAVAAAMKTAGDDADSAKLIRLGLKELAR) form a domain III region.

This sequence belongs to the RuvA family. In terms of assembly, homotetramer. Forms an RuvA(8)-RuvB(12)-Holliday junction (HJ) complex. HJ DNA is sandwiched between 2 RuvA tetramers; dsDNA enters through RuvA and exits via RuvB. An RuvB hexamer assembles on each DNA strand where it exits the tetramer. Each RuvB hexamer is contacted by two RuvA subunits (via domain III) on 2 adjacent RuvB subunits; this complex drives branch migration. In the full resolvosome a probable DNA-RuvA(4)-RuvB(12)-RuvC(2) complex forms which resolves the HJ.

Its subcellular location is the cytoplasm. In terms of biological role, the RuvA-RuvB-RuvC complex processes Holliday junction (HJ) DNA during genetic recombination and DNA repair, while the RuvA-RuvB complex plays an important role in the rescue of blocked DNA replication forks via replication fork reversal (RFR). RuvA specifically binds to HJ cruciform DNA, conferring on it an open structure. The RuvB hexamer acts as an ATP-dependent pump, pulling dsDNA into and through the RuvAB complex. HJ branch migration allows RuvC to scan DNA until it finds its consensus sequence, where it cleaves and resolves the cruciform DNA. This chain is Holliday junction branch migration complex subunit RuvA, found in Rhizobium leguminosarum bv. trifolii (strain WSM2304).